The following is a 283-amino-acid chain: MAVPPTYADLGKSARDVFTKGYGFGLIKLDLKTKSENGLEFTSSGSANTETTKVTGSLETKYRWTEYGLTFTEKWNTDNTLGTEITVEDQLARGLKLTFDSSFSPNTGKKNAKIKTGYKREHINLGCDVDFDIAGPSIRGALVLGYEGWLAGYQMNFETAKSRVTQSNFAVGYKTDEFQLHTNVNDGTEFGGSIYQKVNKKLETAVNLAWTAGNSNTRFGIAAKYQIDPDACFSAKVNNSSLIGLGYTQTLKPGIKLTLSALLDGKNVNAGGHKLGLGLEFQA.

Alanine 2 is modified (N-acetylalanine). Lysine 12 serves as a coordination point for ATP. A Glycyl lysine isopeptide (Lys-Gly) (interchain with G-Cter in ubiquitin) cross-link involves residue lysine 12. A Phosphoserine modification is found at serine 13. A Phosphothreonine modification is found at threonine 19. Lysine 20 is a binding site for ATP. Lysine 20 is subject to N6-acetyllysine; alternate. Position 20 is an N6-succinyllysine; alternate (lysine 20). Lysine 20 is covalently cross-linked (Glycyl lysine isopeptide (Lys-Gly) (interchain with G-Cter in ubiquitin); alternate). The next 2 membrane-spanning stretches (beta stranded) occupy residues 26 to 35 and 39 to 47; these read LIKLDLKTKS and LEFTSSGSA. Glycyl lysine isopeptide (Lys-Gly) (interchain with G-Cter in ubiquitin) cross-links involve residues lysine 53 and lysine 61. Residues 54-64 traverse the membrane as a beta stranded segment; it reads VTGSLETKYRW. Tyrosine 67 is subject to Phosphotyrosine. 3 beta stranded membrane-spanning segments follow: residues 69-76, 80-89, and 95-104; these read LTFTEKWN, TLGTEITVED, and LKLTFDSSFS. Threonine 107 carries the phosphothreonine modification. N6-acetyllysine; alternate is present on lysine 109. Lysine 109 is covalently cross-linked (Glycyl lysine isopeptide (Lys-Gly) (interchain with G-Cter in ubiquitin); alternate). Lysine 110 participates in a covalent cross-link: Glycyl lysine isopeptide (Lys-Gly) (interchain with G-Cter in ubiquitin). 4 beta stranded membrane passes run 111–120, 123–130, 137–145, and 150–158; these read NAKIKTGYKR, INLGCDVD, SIRGALVLG, and LAGYQMNFE. Lysine 161 is covalently cross-linked (Glycyl lysine isopeptide (Lys-Gly) (interchain with G-Cter in ubiquitin)). The next 6 membrane-spanning stretches (beta stranded) occupy residues 163–175, 178–185, 189–198, 202–211, 218–227, and 231–238; these read RVTQ…GYKT, FQLHTNVN, EFGGSIYQKV, LETAVNLAWT, RFGIAAKYQI, and ACFSAKVN. Position 193 is a phosphoserine; by NEK1 (serine 193). Phosphoserine is present on serine 240. An NAD(+)-binding site is contributed by 242–244; it reads LIG. The beta stranded transmembrane segment at 242 to 251 threads the bilayer; that stretch reads LIGLGYTQTL. Lysine 252 is subject to N6-acetyllysine. A beta stranded membrane pass occupies residues 254–263; that stretch reads GIKLTLSALL. Position 260 to 264 (260 to 264) interacts with NAD(+); it reads SALLD. N6-acetyllysine; alternate is present on lysine 266. Residue lysine 266 forms a Glycyl lysine isopeptide (Lys-Gly) (interchain with G-Cter in ubiquitin); alternate linkage. The beta stranded transmembrane segment at 273-282 threads the bilayer; it reads HKLGLGLEFQ. Lysine 274 is covalently cross-linked (Glycyl lysine isopeptide (Lys-Gly) (interchain with G-Cter in ubiquitin)).

The protein belongs to the eukaryotic mitochondrial porin family. In terms of assembly, homodimer and homotrimer; in response to cyclic AMP or calcium; oligomerization is required for scramblase activity. Component of the mitochondrial permeability transition pore complex (mPTPC), at least composed of SPG7, VDAC1 and PPIF. Interacts with SPG7, NIPSNAP2 and SLC25A30. Interacts with hexokinases including HK1. The HK1-VDAC1 complex interacts with ATF2. Interacts with BCL2L1. Interacts with BAK1. Interacts with RTL10/BOP (via BH3 domain). Interacts with amyloid-beta and APP; induces VDAC1 dephosphorylation. Interacts with TMEM41B. Interacts with BCAP31. Interacts with HSPA9; this interaction couples ITPR1 to VDAC1. Post-translationally, phosphorylation at Ser-193 by NEK1 promotes the closed conformational state preventing excessive mitochondrial membrane permeability and subsequent apoptotic cell death after injury. Phosphorylation by the AKT-GSK3B axis stabilizes the protein probably by preventing ubiquitin-mediated proteasomal degradation. Ubiquitinated. Undergoes monoubiquitination and polyubiquitination by PRKN; monoubiquitination at Lys-274 inhibits apoptosis, whereas polyubiquitination leads to its degradation and promotes mitophagy. Deubiquitinated by USP30. As to expression, predominantly in brain astrocytes.

The protein localises to the mitochondrion outer membrane. It localises to the cell membrane. The protein resides in the membrane raft. The enzyme catalyses chloride(in) = chloride(out). It catalyses the reaction K(+)(in) = K(+)(out). It carries out the reaction ATP(in) = ATP(out). The catalysed reaction is Ca(2+)(in) = Ca(2+)(out). The enzyme catalyses Na(+)(in) = Na(+)(out). It catalyses the reaction Mg(2+)(in) = Mg(2+)(out). It carries out the reaction L-glutamate(out) = L-glutamate(in). The catalysed reaction is dopamine(out) = dopamine(in). The enzyme catalyses acetylcholine(in) = acetylcholine(out). It catalyses the reaction Fe(III)-[cytochrome c](out) = Fe(III)-[cytochrome c](in). It carries out the reaction a 1,2-diacyl-sn-glycero-3-phosphocholine(in) = a 1,2-diacyl-sn-glycero-3-phosphocholine(out). The catalysed reaction is a 1,2-diacyl-sn-glycero-3-phospho-L-serine(in) = a 1,2-diacyl-sn-glycero-3-phospho-L-serine(out). Inhibited by nitric oxide. Its function is as follows. Non-selective voltage-gated ion channel that mediates the transport of anions and cations through the mitochondrion outer membrane and plasma membrane. The channel at the outer mitochondrial membrane allows diffusion of small hydrophilic molecules; in the plasma membrane it is involved in cell volume regulation and apoptosis. It adopts an open conformation at low or zero membrane potential and a closed conformation at potentials above 30-40 mV. The open state has a weak anion selectivity whereas the closed state is cation-selective. Binds various signaling molecules, including the sphingolipid ceramide, the phospholipid phosphatidylcholine, and the sterols cholesterol and oxysterol. In depolarized mitochondria, acts downstream of PRKN and PINK1 to promote mitophagy or prevent apoptosis; polyubiquitination by PRKN promotes mitophagy, while monoubiquitination by PRKN decreases mitochondrial calcium influx which ultimately inhibits apoptosis. May participate in the formation of the permeability transition pore complex (PTPC) responsible for the release of mitochondrial products that triggers apoptosis. May mediate ATP export from cells. Part of a complex composed of HSPA9, ITPR1 and VDAC1 that regulates mitochondrial calcium-dependent apoptosis by facilitating calcium transport from the ER lumen to the mitochondria intermembrane space thus providing calcium for the downstream calcium channel MCU that directly releases it into mitochondria matrix. Mediates cytochrome c efflux. In terms of biological role, catalyzes the scrambling of phospholipids across the outer mitochondrial membrane; the mechanism is unrelated to channel activity and is capable of translocating both anionic and zwitterionic phospholipids. The polypeptide is Non-selective voltage-gated ion channel VDAC1 (Bos taurus (Bovine)).